The following is a 374-amino-acid chain: tRNA-specific 2-thiouridylase MnmA (374 aa).

ATP-binding positions include 17–24 and Met-43; that span reads GMSGGVDS. The tract at residues 103–105 is interaction with target base in tRNA; it reads NPD. Cys-108 (nucleophile) is an active-site residue. Cys-108 and Cys-204 form a disulfide bridge. Gly-132 provides a ligand contact to ATP. The interaction with tRNA stretch occupies residues 154-156; it reads KDQ. Residue Cys-204 is the Cysteine persulfide intermediate of the active site. The interaction with tRNA stretch occupies residues 316-317; that stretch reads RY.

It belongs to the MnmA/TRMU family.

Its subcellular location is the cytoplasm. It catalyses the reaction S-sulfanyl-L-cysteinyl-[protein] + uridine(34) in tRNA + AH2 + ATP = 2-thiouridine(34) in tRNA + L-cysteinyl-[protein] + A + AMP + diphosphate + H(+). Functionally, catalyzes the 2-thiolation of uridine at the wobble position (U34) of tRNA, leading to the formation of s(2)U34. The polypeptide is tRNA-specific 2-thiouridylase MnmA (Pseudomonas fluorescens (strain SBW25)).